We begin with the raw amino-acid sequence, 223 residues long: MHIVIMGCGRVGSALAQALEQQGHTVAVIDRDPTSFRRLGSSFGGRRVTGIGFDQDTLREAGIEEAGAFAAVSSGDNSNIIAARVAREMFGVENVAARIYDPRRAEVYQRLGIPTVATVRWTADQMLRRLLPSGAEPLWRDPTGGVQLAEVHTSSSWVGHKISRLQEETGVRVAFVTRLGEAILPSSQTVLQEGDLVHVMMRTDEVHKVEAAFAKGPEEEGGH.

The region spanning 1–118 (MHIVIMGCGR…QRLGIPTVAT (118 aa)) is the RCK N-terminal domain. Residues 7-11 (GCGRV), D30, 73-74 (SS), and R98 contribute to the NAD(+) site. The region spanning 133 to 215 (SGAEPLWRDP…VHKVEAAFAK (83 aa)) is the RCK C-terminal domain.

In terms of biological role, part of a potassium transport system. In Streptomyces coelicolor (strain ATCC BAA-471 / A3(2) / M145), this protein is Trk system potassium uptake protein TrkA (trkA).